A 261-amino-acid polypeptide reads, in one-letter code: Putative cysteine protease YopT-like y4zC (261 aa).

Polar residues predominate over residues 1–15 (MHSPISGSFTSSTQV). 2 disordered regions span residues 1–48 (MHSP…CPDK) and 54–73 (SKPQ…ARPS). Positions 61–73 (PNNPSTSSPARPS) are enriched in low complexity. Active-site residues include cysteine 93, histidine 205, and aspartate 220.

Belongs to the peptidase C58 family.

Functionally, potential cysteine protease, which may play a central role after invasion of host cell. The polypeptide is Putative cysteine protease YopT-like y4zC (Sinorhizobium fredii (strain NBRC 101917 / NGR234)).